The following is a 392-amino-acid chain: N-acyl-phosphatidylethanolamine-hydrolyzing phospholipase D (392 aa).

The residue at position 1 (methionine 1) is an N-acetylmethionine. A compositionally biased stretch (polar residues) spans 1–16; sequence MDENETNQLLMTSNQY. The disordered stretch occupies residues 1–39; that stretch reads MDENETNQLLMTSNQYPKEAVRKRQNSRNSGGSDSSRFS. Over residues 27–36 the composition is skewed to low complexity; that stretch reads SRNSGGSDSS. Residues histidine 183 and histidine 185 each contribute to the Zn(2+) site. An N-acyl-1,2-diacyl-sn-glycero-3-phosphoethanolamine is bound at residue tyrosine 186. 3 residues coordinate Zn(2+): aspartate 187, histidine 188, and histidine 251. Lysine 254 and methionine 258 together coordinate deoxycholate. A Zn(2+)-binding site is contributed by aspartate 282. Histidine 319 lines the an N-acyl-1,2-diacyl-sn-glycero-3-phosphoethanolamine pocket. Histidine 341 serves as a coordination point for Zn(2+). Deoxycholate is bound at residue alanine 346.

This sequence belongs to the NAPE-PLD family. In terms of assembly, homodimer. Bile acids promote the assembly of inactive monomers into an active dimer and enable catalysis. It depends on Zn(2+) as a cofactor. As to expression, widely expressed. Highest expression in brain, kidney and testis (at protein level). Expressed in adipose tissue (at protein level).

It is found in the golgi apparatus membrane. It localises to the early endosome membrane. Its subcellular location is the nucleus envelope. The protein localises to the nucleus. The protein resides in the nucleoplasm. It carries out the reaction an N-acyl-1,2-diacyl-sn-glycero-3-phosphoethanolamine + H2O = an N-acylethanolamine + a 1,2-diacyl-sn-glycero-3-phosphate + H(+). The enzyme catalyses N-butanoyl-1-hexadecanoyl-2-(9Z,12Z-octadecadienoyl)-sn-glycero-3-phosphoethanolamine + H2O = N-butanoyl ethanolamine + 1-hexadecanoyl-2-(9Z,12Z-octadecadienoyl)-sn-glycero-3-phosphate + H(+). It catalyses the reaction N-hexanoyl-1-hexadecanoyl-2-(9Z,12Z-octadecadienoyl)-sn-glycero-3-phosphoethanolamine + H2O = N-hexanoyl ethanolamine + 1-hexadecanoyl-2-(9Z,12Z-octadecadienoyl)-sn-glycero-3-phosphate + H(+). The catalysed reaction is N-octanoyl-1-hexadecanoyl-2-(9Z,12Z-octadecadienoyl)-sn-glycero-3-phosphoethanolamine + H2O = N-octanoyl ethanolamine + 1-hexadecanoyl-2-(9Z,12Z-octadecadienoyl)-sn-glycero-3-phosphate + H(+). It carries out the reaction N-decanoyl-1-hexadecanoyl-2-(9Z,12Z-octadecadienoyl)-sn-glycero-3-phosphoethanolamine + H2O = N-decanoyl ethanolamine + 1-hexadecanoyl-2-(9Z,12Z-octadecadienoyl)-sn-glycero-3-phosphate + H(+). The enzyme catalyses N-dodecanoyl-1,2-di-(9Z-octadecenoyl)-sn-glycero-3-phosphoethanolamine + H2O = N-dodecanoylethanolamine + 1,2-di-(9Z-octadecenoyl)-sn-glycero-3-phosphate + H(+). It catalyses the reaction N-tetradecanoyl-1,2-di-(9Z-octadecenoyl)-sn-glycero-3-phosphoethanolamine + H2O = N-tetradecanoylethanolamine + 1,2-di-(9Z-octadecenoyl)-sn-glycero-3-phosphate + H(+). The catalysed reaction is N-hexadecanoyl-1,2-di-(9Z-octadecenoyl)-sn-glycero-3-phosphoethanolamine + H2O = N-hexadecanoylethanolamine + 1,2-di-(9Z-octadecenoyl)-sn-glycero-3-phosphate + H(+). It carries out the reaction N,1-dihexadecanoyl-2-(9Z,12Z-octadecadienoyl)-sn-glycero-3-phosphoethanolamine + H2O = 1-hexadecanoyl-2-(9Z,12Z-octadecadienoyl)-sn-glycero-3-phosphate + N-hexadecanoylethanolamine + H(+). The enzyme catalyses N-octadecanoyl-1,2-di-(9Z-octadecenoyl)-sn-glycero-3-phosphoethanolamine + H2O = N-octadecanoyl ethanolamine + 1,2-di-(9Z-octadecenoyl)-sn-glycero-3-phosphate + H(+). It catalyses the reaction N,1,2-tri-(9Z-octadecenoyl)-sn-glycero-3-phosphoethanolamine + H2O = N-(9Z-octadecenoyl) ethanolamine + 1,2-di-(9Z-octadecenoyl)-sn-glycero-3-phosphate + H(+). The catalysed reaction is N-(5Z,8Z,11Z,14Z-eicosatetraenoyl)-1,2-diacyl-sn-glycero-3-phosphoethanolamine + H2O = N-(5Z,8Z,11Z,14Z-eicosatetraenoyl)-ethanolamine + a 1,2-diacyl-sn-glycero-3-phosphate + H(+). It carries out the reaction N-(5Z,8Z,11Z,14Z-eicosatetraenoyl)-1,2-di-(9Z-octadecenoyl)-sn-glycero-3-phosphoethanolamine + H2O = N-(5Z,8Z,11Z,14Z-eicosatetraenoyl)-ethanolamine + 1,2-di-(9Z-octadecenoyl)-sn-glycero-3-phosphate + H(+). The enzyme catalyses 1-O-(1Z-octadecenoyl)-2-(9Z-octadecenoyl)-sn-glycero-3-phospho-N-hexadecanoyl-ethanolamine + H2O = 1-O-(1Z-octadecenoyl)-2-(9Z-octadecenoyl)-sn-glycero-3-phosphate + N-hexadecanoylethanolamine + H(+). It catalyses the reaction N,1-diacyl-sn-glycero-3-phosphoethanolamine + H2O = an N-acylethanolamine + a 1-acyl-sn-glycero-3-phosphate + H(+). The catalysed reaction is N,1-dihexadecanoyl-sn-glycero-3-phosphoethanolamine + H2O = N-hexadecanoylethanolamine + 1-hexadecanoyl-sn-glycero-3-phosphate + H(+). It carries out the reaction N-(5Z,8Z,11Z,14Z-eicosatetraenoyl)-1-(9Z-octadecenoyl)-sn-glycero-3-phosphoethanolamine + H2O = N-(5Z,8Z,11Z,14Z-eicosatetraenoyl)-ethanolamine + 1-(9Z-octadecenoyl)-sn-glycero-3-phosphate + H(+). With respect to regulation, activated by divalent cations. Activated by bile acids. Functionally, D-type phospholipase that hydrolyzes N-acyl-phosphatidylethanolamines (NAPEs) to produce bioactive N-acylethanolamines/fatty acid ethanolamides (NAEs/FAEs) and phosphatidic acid. Cleaves the terminal phosphodiester bond of diacyl- and alkenylacyl-NAPEs, primarily playing a role in the generation of long-chain saturated and monounsaturated NAEs in the brain. May control NAPE homeostasis in dopaminergic neuron membranes and regulate neuron survival, partly through RAC1 activation. As a regulator of lipid metabolism in the adipose tissue, mediates the crosstalk between adipocytes, gut microbiota and immune cells to control body temperature and weight. In particular, regulates energy homeostasis by promoting cold-induced brown or beige adipocyte differentiation program to generate heat from fatty acids and glucose. Has limited D-type phospholipase activity toward N-acyl lyso-NAPEs. The protein is N-acyl-phosphatidylethanolamine-hydrolyzing phospholipase D (NAPEPLD) of Bos taurus (Bovine).